The primary structure comprises 230 residues: Orotidine 5'-phosphate decarboxylase (230 aa).

Substrate-binding positions include aspartate 11, lysine 34, 61 to 70 (DLKLHDIPNT), threonine 117, arginine 179, glutamine 188, glycine 208, and arginine 209. Lysine 63 acts as the Proton donor in catalysis.

Belongs to the OMP decarboxylase family. Type 1 subfamily. Homodimer.

The catalysed reaction is orotidine 5'-phosphate + H(+) = UMP + CO2. Its pathway is pyrimidine metabolism; UMP biosynthesis via de novo pathway; UMP from orotate: step 2/2. In terms of biological role, catalyzes the decarboxylation of orotidine 5'-monophosphate (OMP) to uridine 5'-monophosphate (UMP). The sequence is that of Orotidine 5'-phosphate decarboxylase from Streptococcus pyogenes serotype M1.